The sequence spans 86 residues: Late effector protein 1 (86 aa).

The first 24 residues, 1 to 24, serve as a signal peptide directing secretion; that stretch reads MRSHQMAAFFAVSLMMMVVLGALS.

It belongs to the lep1 family. Interacts at the cell wall with secreted rep1 repellent peptides.

The protein localises to the secreted. It is found in the cell wall. Its function is as follows. Core effector contributing to spore formation and tumor formation at the host plant. Modulates surface hydrophobicity promoting cell-cell or cell-surface contacts. Lep1 and rep1 interact in aerial hyphae to form a strong hydrophobic layer. Plays a crucial role in hyphal aggregation that might be a prerequisite for strong proliferation of diploid cells and for induction of the morphological changes associated with spore formation. The chain is Late effector protein 1 from Mycosarcoma maydis (Corn smut fungus).